Consider the following 473-residue polypeptide: ATP synthase subunit beta (473 aa).

Position 153–160 (153–160 (GGAGVGKT)) interacts with ATP.

This sequence belongs to the ATPase alpha/beta chains family. As to quaternary structure, F-type ATPases have 2 components, CF(1) - the catalytic core - and CF(0) - the membrane proton channel. CF(1) has five subunits: alpha(3), beta(3), gamma(1), delta(1), epsilon(1). CF(0) has three main subunits: a(1), b(2) and c(9-12). The alpha and beta chains form an alternating ring which encloses part of the gamma chain. CF(1) is attached to CF(0) by a central stalk formed by the gamma and epsilon chains, while a peripheral stalk is formed by the delta and b chains.

It localises to the cell membrane. It carries out the reaction ATP + H2O + 4 H(+)(in) = ADP + phosphate + 5 H(+)(out). Produces ATP from ADP in the presence of a proton gradient across the membrane. The catalytic sites are hosted primarily by the beta subunits. The protein is ATP synthase subunit beta of Rickettsia africae (strain ESF-5).